A 299-amino-acid polypeptide reads, in one-letter code: 4-diphosphocytidyl-2-C-methyl-D-erythritol kinase (299 aa).

K11 is an active-site residue. 94–104 contacts ATP; that stretch reads PQGGGLGGGSS. Residue D136 is part of the active site.

Belongs to the GHMP kinase family. IspE subfamily.

It catalyses the reaction 4-CDP-2-C-methyl-D-erythritol + ATP = 4-CDP-2-C-methyl-D-erythritol 2-phosphate + ADP + H(+). It functions in the pathway isoprenoid biosynthesis; isopentenyl diphosphate biosynthesis via DXP pathway; isopentenyl diphosphate from 1-deoxy-D-xylulose 5-phosphate: step 3/6. Functionally, catalyzes the phosphorylation of the position 2 hydroxy group of 4-diphosphocytidyl-2C-methyl-D-erythritol. The polypeptide is 4-diphosphocytidyl-2-C-methyl-D-erythritol kinase (Bordetella parapertussis (strain 12822 / ATCC BAA-587 / NCTC 13253)).